Consider the following 1638-residue polypeptide: Ciliary rootlet coiled-coil protein 2 (1638 aa).

Residues Met-1–Gly-20 are compositionally biased toward polar residues. Disordered regions lie at residues Met-1–Leu-21, Arg-39–Ser-92, Ala-396–His-423, and Thr-1168–Glu-1213. Residues Ser-67 to Pro-82 show a composition bias toward low complexity. Residues Thr-85–Glu-144 are a coiled coil. Positions Ser-406–Ser-421 are enriched in polar residues. Coiled coils occupy residues Leu-426 to Glu-1234 and Leu-1281 to Ala-1315. A compositionally biased stretch (basic and acidic residues) spans Arg-1180–Val-1193. 2 disordered regions span residues Arg-1338–Asp-1383 and Ala-1506–Ser-1551. The span at Ser-1349–Tyr-1371 shows a compositional bias: polar residues. Coiled-coil stretches lie at residues Arg-1412–Ala-1506 and Arg-1542–Glu-1576.

The protein belongs to the rootletin family.

In Mus musculus (Mouse), this protein is Ciliary rootlet coiled-coil protein 2.